A 161-amino-acid polypeptide reads, in one-letter code: AP-1 complex subunit sigma-1 (161 aa).

The protein belongs to the adaptor complexes small subunit family. In terms of assembly, adaptor protein complex 1 (AP-1) is a heterotetramer composed of two large adaptins (gamma-type subunit and beta-type subunit), a medium adaptin (mu-type subunit) and a small adaptin (sigma-type subunit). As to expression, expressed in seedlings, roots, stems, leaves, flowers and siliques (developing fruits and seeds).

The protein resides in the golgi apparatus. It localises to the cytoplasmic vesicle. Its subcellular location is the clathrin-coated vesicle membrane. Functionally, subunit of clathrin-associated adaptor protein complex 1 that plays a role in protein sorting at the trans-Golgi network and early endosomes (TGN/EE). The AP complexes mediate the recruitment of clathrin to membranes and the recognition of sorting signals within the cytosolic tails of transmembrane cargo molecules. The chain is AP-1 complex subunit sigma-1 (AAP19-1) from Arabidopsis thaliana (Mouse-ear cress).